The following is a 436-amino-acid chain: Proteasome-activating nucleotidase (436 aa).

The stretch at 7-98 (KDVRDLCEKF…LRSDLQRMKK (92 aa)) forms a coiled coil. Residues 223-228 (GTGKTL) and His362 contribute to the ATP site. A docks into pockets in the proteasome alpha-ring to cause gate opening region spans residues 434–436 (AYH).

Belongs to the AAA ATPase family. Homohexamer. The hexameric complex has a two-ring architecture resembling a top hat that caps the 20S proteasome core at one or both ends. Upon ATP-binding, the C-terminus of PAN interacts with the alpha-rings of the proteasome core by binding to the intersubunit pockets.

Its subcellular location is the cytoplasm. Its function is as follows. ATPase which is responsible for recognizing, binding, unfolding and translocation of substrate proteins into the archaeal 20S proteasome core particle. Is essential for opening the gate of the 20S proteasome via an interaction with its C-terminus, thereby allowing substrate entry and access to the site of proteolysis. Thus, the C-termini of the proteasomal ATPase function like a 'key in a lock' to induce gate opening and therefore regulate proteolysis. Unfolding activity requires energy from ATP hydrolysis, whereas ATP binding alone promotes ATPase-20S proteasome association which triggers gate opening, and supports translocation of unfolded substrates. This is Proteasome-activating nucleotidase from Methanopyrus kandleri (strain AV19 / DSM 6324 / JCM 9639 / NBRC 100938).